A 292-amino-acid chain; its full sequence is Ribosomal protein L11 methyltransferase (292 aa).

Residues T143, G164, D186, and N228 each coordinate S-adenosyl-L-methionine.

Belongs to the methyltransferase superfamily. PrmA family.

The protein localises to the cytoplasm. It catalyses the reaction L-lysyl-[protein] + 3 S-adenosyl-L-methionine = N(6),N(6),N(6)-trimethyl-L-lysyl-[protein] + 3 S-adenosyl-L-homocysteine + 3 H(+). Its function is as follows. Methylates ribosomal protein L11. This Aeromonas salmonicida (strain A449) protein is Ribosomal protein L11 methyltransferase.